A 146-amino-acid polypeptide reads, in one-letter code: UPF0178 protein BCAH820_3075 (146 aa).

It belongs to the UPF0178 family.

The chain is UPF0178 protein BCAH820_3075 from Bacillus cereus (strain AH820).